We begin with the raw amino-acid sequence, 355 residues long: S-adenosylmethionine:tRNA ribosyltransferase-isomerase (355 aa).

This sequence belongs to the QueA family. As to quaternary structure, monomer.

It localises to the cytoplasm. It catalyses the reaction 7-aminomethyl-7-carbaguanosine(34) in tRNA + S-adenosyl-L-methionine = epoxyqueuosine(34) in tRNA + adenine + L-methionine + 2 H(+). It functions in the pathway tRNA modification; tRNA-queuosine biosynthesis. Transfers and isomerizes the ribose moiety from AdoMet to the 7-aminomethyl group of 7-deazaguanine (preQ1-tRNA) to give epoxyqueuosine (oQ-tRNA). The chain is S-adenosylmethionine:tRNA ribosyltransferase-isomerase from Burkholderia lata (strain ATCC 17760 / DSM 23089 / LMG 22485 / NCIMB 9086 / R18194 / 383).